The following is a 370-amino-acid chain: MTVNDAVVFILAAFLLWGAADYCLGNRWGLGERFADGFKAMGPLALSMIGIVSLAPVLAAILIPIVAPFYTAIGADPSSFANTILAIDMGGYALAGEMAKDPQAGLFSWVFLGTMMGPAIVFTIPVALGIIEKEDHPYFAKGILIGLCTVPIGCLIGGLCAGFDIGMIGKNLLIPSLLSAVIAFGLWRYTDRMIQLFHLFGKAVSMVAIIGLAAVSVETMTGIVLIPGMENVETGIQTTGTIAIALAGAFPMTAFITKTFKKPLQALGKCLHLDETATAGLVTSLAHHIPMLASLKDMTPRGKVINVAFAVSGAFVLGSHLGFVAGMKKEMAAAMIIGKLAGGVTAAAAAAWMTPAQSAKQQKRISASHS.

A run of 10 helical transmembrane segments spans residues 6-26 (AVVFILAAFLLWGAADYCLGN), 49-69 (IGIVSLAPVLAAILIPIVAPF), 79-99 (SFANTILAIDMGGYALAGEMA), 111-131 (FLGTMMGPAIVFTIPVALGII), 143-163 (ILIGLCTVPIGCLIGGLCAGF), 167-187 (MIGKNLLIPSLLSAVIAFGLW), 206-226 (MVAIIGLAAVSVETMTGIVLI), 236-256 (IQTTGTIAIALAGAFPMTAFI), 307-327 (VAFAVSGAFVLGSHLGFVAGM), and 333-353 (AAMIIGKLAGGVTAAAAAAWM).

The protein belongs to the EutH family.

It is found in the cell membrane. This is an uncharacterized protein from Bacillus subtilis (strain 168).